The following is a 1868-amino-acid chain: Dedicator of cytokinesis protein 5 (1868 aa).

Residues 8-69 (KRQKYGVAIY…PETYIHLKEA (62 aa)) enclose the SH3 domain. A Phosphoserine modification is found at serine 365. In terms of domain architecture, C2 DOCK-type spans 443–627 (RNDIYVTLIH…DSFQIATLIC (185 aa)). Lysine 818 is subject to N6-acetyllysine. Positions 1231-1642 (YKDKKREDIY…VEKLYGVITL (412 aa)) constitute a DOCKER domain. Low complexity predominate over residues 1681–1692 (STSSNSSDNASS). Disordered regions lie at residues 1681-1730 (STSS…RISK) and 1742-1868 (QVIA…PGSQ). Residues 1704 to 1728 (LFERRASSGARVEDLPPKEDSENRI) are compositionally biased toward basic and acidic residues. Serine 1755, serine 1765, serine 1771, serine 1784, and serine 1788 each carry phosphoserine. Threonine 1793 carries the phosphothreonine modification. Residues 1796–1810 (ATRTLSSPSLQTDGL) show a composition bias toward polar residues. Residues serine 1832 and serine 1867 each carry the phosphoserine modification.

This sequence belongs to the DOCK family. In terms of assembly, interacts with CRK and CRKL. Interacts (via N-terminus) with tensin TNS3 (via N-terminus); the interaction increases DOCK5 guanine nucleotide exchange activity towards Rac. Interacts with ELMO1. Highly expressed in lens, where it predominantly localizes to anterior epithelial cells, and is weakly expressed in lens fiber (at protein level). Expressed in brain, eye, lung, spleen and kidney, but not in thymus or peripheral blood leukocytes.

The protein resides in the cytoplasm. Its subcellular location is the cell membrane. It localises to the cell projection. The protein localises to the podosome. Guanine nucleotide exchange factor (GEF) for Rho and Rac. GEF proteins activate small GTPases by exchanging bound GDP for free GTP. Along with DOCK1, mediates CRK/CRKL regulation of epithelial and endothelial cell spreading and migration on type IV collagen. This is Dedicator of cytokinesis protein 5 from Mus musculus (Mouse).